The sequence spans 1058 residues: Carbamoyl phosphate synthase large chain (1058 aa).

A carboxyphosphate synthetic domain region spans residues 1-401; that stretch reads MPKRKDIQKI…SLLKACRSLE (401 aa). Residues Arg-129, Arg-169, Gly-175, Gly-176, Arg-208, Ile-210, Glu-215, Gly-241, Ile-242, His-243, Gln-284, and Glu-298 each contribute to the ATP site. One can recognise an ATP-grasp 1 domain in the interval 133 to 327; it reads KQLMQELDQP…IAKLAAKIAV (195 aa). Gln-284, Glu-298, and Asn-300 together coordinate Mg(2+). Mn(2+) contacts are provided by Gln-284, Glu-298, and Asn-300. The interval 402-546 is oligomerization domain; it reads IGVCHNEMTS…YSTYELENES (145 aa). Positions 547–929 are carbamoyl phosphate synthetic domain; that stretch reads VQSNKESILV…ALYKAFEANN (383 aa). The region spanning 671 to 861 is the ATP-grasp 2 domain; that stretch reads EKALKELGIP…MAQIATKLIL (191 aa). ATP contacts are provided by Arg-707, Ser-746, Ile-748, Glu-752, Gly-777, Val-778, His-779, Ser-780, Gln-820, and Glu-832. The Mg(2+) site is built by Gln-820, Glu-832, and Asn-834. Gln-820, Glu-832, and Asn-834 together coordinate Mn(2+). The MGS-like domain occupies 930–1058; it reads SHLSEFGQIV…ESRCFNIEAI (129 aa). The allosteric domain stretch occupies residues 930 to 1058; that stretch reads SHLSEFGQIV…ESRCFNIEAI (129 aa).

Belongs to the CarB family. Composed of two chains; the small (or glutamine) chain promotes the hydrolysis of glutamine to ammonia, which is used by the large (or ammonia) chain to synthesize carbamoyl phosphate. Tetramer of heterodimers (alpha,beta)4. The cofactor is Mg(2+). It depends on Mn(2+) as a cofactor.

It carries out the reaction hydrogencarbonate + L-glutamine + 2 ATP + H2O = carbamoyl phosphate + L-glutamate + 2 ADP + phosphate + 2 H(+). It catalyses the reaction hydrogencarbonate + NH4(+) + 2 ATP = carbamoyl phosphate + 2 ADP + phosphate + 2 H(+). It functions in the pathway amino-acid biosynthesis; L-arginine biosynthesis; carbamoyl phosphate from bicarbonate: step 1/1. Its pathway is pyrimidine metabolism; UMP biosynthesis via de novo pathway; (S)-dihydroorotate from bicarbonate: step 1/3. Its function is as follows. Large subunit of the glutamine-dependent carbamoyl phosphate synthetase (CPSase). CPSase catalyzes the formation of carbamoyl phosphate from the ammonia moiety of glutamine, carbonate, and phosphate donated by ATP, constituting the first step of 2 biosynthetic pathways, one leading to arginine and/or urea and the other to pyrimidine nucleotides. The large subunit (synthetase) binds the substrates ammonia (free or transferred from glutamine from the small subunit), hydrogencarbonate and ATP and carries out an ATP-coupled ligase reaction, activating hydrogencarbonate by forming carboxy phosphate which reacts with ammonia to form carbamoyl phosphate. The polypeptide is Carbamoyl phosphate synthase large chain (Streptococcus pyogenes serotype M3 (strain ATCC BAA-595 / MGAS315)).